Here is a 3471-residue protein sequence, read N- to C-terminus: Genome polyprotein (3471 aa).

The stretch at 513-603 (EVQDALEKSM…RADIDALKKK (91 aa)) forms a coiled coil. Disordered stretches follow at residues 603 to 639 (KPAQ…EMSE) and 1271 to 1307 (NKTT…ARTS). Composition is skewed to polar residues over residues 606–621 (QSVT…SGTA) and 1271–1291 (NKTT…TSTV). A run of 2 helical transmembrane segments spans residues 1493-1513 (DKWI…LHYY) and 1592-1612 (MSSL…GKIP). Residues 1748 to 1914 (LELMNESYTY…PDVPKNEANP (167 aa)) form the SF3 helicase domain. 1774–1781 (GAPGVGKS) contributes to the ATP binding site. The chain crosses the membrane as a helical span at residues 2360 to 2380 (ILLAIGASVAVAGVAVGAVIL). The span at 2391 to 2401 (EDEEIEGEEGE) shows a compositional bias: acidic residues. Disordered regions lie at residues 2391 to 2411 (EDEE…HESD) and 2435 to 2460 (VAEA…NFLG). Residues 2435–2448 (VAEAHEEKSTEKPR) show a composition bias toward basic and acidic residues. Positions 2629-2847 (GVDRDLSMTN…YAETLTQEHL (219 aa)) constitute a Peptidase C3 domain. Active-site for picornain 3C-like protease activity residues include histidine 2677, glutamate 2714, and cysteine 2808. The 132-residue stretch at 3152–3283 (TKGFAGDYSK…SVHEEFLDVY (132 aa)) folds into the RdRp catalytic domain.

Post-translationally, specific enzymatic cleavages by picornain 3C-like protease in vivo yield mature proteins. Picornain 3C-like protease is autocatalytically processed.

It is found in the virion. The protein resides in the host membrane. It catalyses the reaction RNA(n) + a ribonucleoside 5'-triphosphate = RNA(n+1) + diphosphate. In terms of biological role, picornain 3C-like protease is a thiol protease that probably cleaves the polyprotein. The protein is Genome polyprotein of Oryza sativa (Rice).